A 194-amino-acid polypeptide reads, in one-letter code: Histone H1.0 (194 aa).

M1 is subject to N-acetylmethionine. A compositionally biased stretch (low complexity) spans 1–11 (MTENSTSAPAA). The interval 1-28 (MTENSTSAPAAKPKRAKASKKSTDHPKY) is disordered. Residue T2 is modified to N-acetylthreonine; in Histone H1.0, N-terminally processed. An H15 domain is found at 24 to 97 (DHPKYSDMIV…GASGSFRLAK (74 aa)). Citrulline is present on R42. The disordered stretch occupies residues 86-194 (GVGASGSFRL…SSAKRASKKK (109 aa)). Position 104 is an ADP-ribosylserine (S104). Over residues 105–194 (VAFKKTKKEV…SSAKRASKKK (90 aa)) the composition is skewed to basic residues.

The protein belongs to the histone H1/H5 family. In terms of processing, ADP-ribosylated on Ser-104 in response to DNA damage.

It is found in the nucleus. It localises to the chromosome. In terms of biological role, histones H1 are necessary for the condensation of nucleosome chains into higher-order structures. The histones H1.0 are found in cells that are in terminal stages of differentiation or that have low rates of cell division. The chain is Histone H1.0 (H1-0) from Mus musculus (Mouse).